We begin with the raw amino-acid sequence, 452 residues long: MASQEHPNWLTALLADTRPPPKLFAWSPANIQPKLDEGIDMGSSNSDEEYDNDACVCPSTDSDQRIYIIGPGNIGRLYATHMARHPNALPITLVVHRKELLSQWAACEGVGLADLTSGKIFLNKRFTVEWWTETRPPYGPVKEVADGKKLHNVFISTKAEAGLSEADRIRRYLGRCSSVVFAQNGVCKLWPPHGPLYISHRYPSGDTPTFSACVVSHGVASAGPFLSVHAAPADAYIGPVFWASDPESPWRQPSDDFFIRHIATTPLVNTKQVSSGEIWLLQLEKLVMNAAINPLTALLRYKTGELFTSYGSDDPLARVIDKLLWQTSAVIQGLIDHETSHSVITSYAEQMSQPGTSCSVPKVRKKLTERFSQPILKAKLYAFGLKIFEHRSSMLQDIEAGRKTEIRDFNGWIVDTACFLGTGLDVSVHSGLTGLIERCERFDKMELGRALL.

An NADP(+)-binding site is contributed by 70 to 75 (GPGNIG). Residue K285 is the Proton donor of the active site. Substrate-binding residues include N289, N293, and S393. Residue E405 participates in NADP(+) binding.

The protein belongs to the ketopantoate reductase family.

It catalyses the reaction (R)-2-hydroxy-3-methylbutanoate + NADP(+) = 3-methyl-2-oxobutanoate + NADPH + H(+). Its function is as follows. Ketoisovalerate reductase; part of the gene cluster that mediates the biosynthesis of beauvericin (BEA), a non-ribosomal cyclic hexadepsipeptide that shows antibiotic, antifungal, insecticidal, and cancer cell antiproliferative and antihaptotactic activity. Ketoisovalerate reductase BEA2 catalyzes the NADPH-specific reduction of ketoisovaleric acid to hydroxyisovalerate, a precursor for beauvericin biosynthesis. The nonribosomal cyclodepsipeptide synthetase BEA1 then catalyzes the formation of beauvericin via condensation and cyclization of 3 dipeptidol monomers, each composed of one unit of hydroxyisovalerate and one unit of N-methyl-phenylalanine. The sequence is that of Ketoisovalerate reductase BEA2 from Gibberella fujikuroi (strain CBS 195.34 / IMI 58289 / NRRL A-6831) (Bakanae and foot rot disease fungus).